Consider the following 189-residue polypeptide: UPF0301 protein CTLon_0458 (189 aa).

This sequence belongs to the UPF0301 (AlgH) family.

The protein is UPF0301 protein CTLon_0458 of Chlamydia trachomatis serovar L2b (strain UCH-1/proctitis).